We begin with the raw amino-acid sequence, 416 residues long: Sulfoquinovosyl glycerol-binding protein SmoF (416 aa).

Positions 1–29 (MTLKTIRGKALMGAALCATMLTFSGQAFA) are cleaved as a signal peptide. Gln40 contributes to the 3-(6-sulfo-alpha-D-quinovosyl)glycerol binding site. His41 contributes to the 6-sulfo-D-quinovose binding site. 8 residues coordinate 3-(6-sulfo-alpha-D-quinovosyl)glycerol: Ser71, Asp95, Asp141, Gly194, Thr248, Gly303, Trp304, and Arg373. 3 residues coordinate 6-sulfo-D-quinovose: Gly303, Trp304, and Arg373.

This sequence belongs to the bacterial solute-binding protein 1 family. The complex is probably composed of two ATP-binding proteins (SmoE), two transmembrane proteins (SmoG and SmoH) and a solute-binding protein (SmoF).

It is found in the periplasm. Functionally, part of the ABC transporter complex SmoEFGH involved in sulfoquinovosyl glycerol (SQGro) uptake. Binds sulfoquinovosyl glycerol (SQGro). Can also bind sulfoquinovose (SQ), methyl alpha-sulfoquinovoside (SQMe) and a short-chain derivative of sulfoquinovosyl diacylglycerol (SQDG). Cannot bind D-glucose and D-glucuronic acid. In Agrobacterium fabrum (strain C58 / ATCC 33970) (Agrobacterium tumefaciens (strain C58)), this protein is Sulfoquinovosyl glycerol-binding protein SmoF.